A 549-amino-acid polypeptide reads, in one-letter code: Nectin-3 (549 aa).

The first 57 residues, 1–57, serve as a signal peptide directing secretion; it reads MARTPGPAPLCPGGGKAQLSSAFPPAAGLLLPAPTPPPLLLLLIPLLLFSRLCGALA. The Ig-like V-type domain maps to 58–165; sequence GSIIVEPHVT…GNAQSSTTVT (108 aa). The Extracellular segment spans residues 58-404; sequence GSIIVEPHVT…ATLKDDTIGT (347 aa). Asn-73, Asn-83, Asn-125, Asn-186, Asn-222, and Asn-331 each carry an N-linked (GlcNAc...) asparagine glycan. Cys-78 and Cys-148 are disulfide-bonded. 2 Ig-like C2-type domains span residues 170–258 and 269–354; these read PTVS…KDIR and PEVS…KVIY. 2 cysteine pairs are disulfide-bonded: Cys-193–Cys-246 and Cys-291–Cys-338. Residues 405–425 traverse the membrane as a helical segment; that stretch reads IIASVVGGALFLVLVSILAGV. Residues 426–549 are Cytoplasmic-facing; it reads FCYRRRRTFR…SVISRREWYV (124 aa).

The protein belongs to the nectin family. In terms of assembly, cis- and trans-homodimer. Can form trans-heterodimers with NECTIN1, NECTIN2, PVR, IGSF4B/Necl-1 and with IGSF4. Interaction between NECTIN1 and NECTIN3 on the pre- and postsynaptic sites, respectively, initiates the formation of puncta adherentia junctions between axons and dendrites. Interacts (via Cytoplasmic domain) with AFDN, providing a connection with the actin cytoskeleton. Binds with low affinity to TIGIT. As to expression, ubiquitous with high expression in testes. Localized in spermatids at Sertoli-spermatid junctions. Expressed in ovarian granulosa cells, but only faintly expressed after ovulation.

The protein localises to the cell membrane. Its subcellular location is the postsynaptic cell membrane. It localises to the cell junction. The protein resides in the adherens junction. Cell adhesion molecule that promotes cell-cell adhesion through heterophilic trans-interactions with nectins-like or other nectins, such as trans-interaction with NECTIN2 at Sertoli-spermatid junctions. Trans-interaction with PVR induces activation of CDC42 and RAC small G proteins through common signaling molecules such as SRC and RAP1. Induces endocytosis-mediated down-regulation of PVR from the cell surface, resulting in reduction of cell movement and proliferation. Involved in axon guidance by promoting contacts between the commissural axons and the floor plate cells. Also involved in the formation of cell-cell junctions, including adherens junctions and synapses. Promotes formation of checkerboard-like cellular pattern of hair cells and supporting cells in the auditory epithelium via heterophilic interaction with NECTIN1: NECTIN1 is present in the membrane of hair cells and associates with NECTIN3 on supporting cells, thereby mediating heterotypic adhesion between these two cell types. Plays a role in the morphology of the ciliary body. The protein is Nectin-3 of Mus musculus (Mouse).